Consider the following 489-residue polypeptide: Glycogen synthase (489 aa).

Lys-17 contributes to the ADP-alpha-D-glucose binding site.

This sequence belongs to the glycosyltransferase 1 family. Bacterial/plant glycogen synthase subfamily.

It catalyses the reaction [(1-&gt;4)-alpha-D-glucosyl](n) + ADP-alpha-D-glucose = [(1-&gt;4)-alpha-D-glucosyl](n+1) + ADP + H(+). Its pathway is glycan biosynthesis; glycogen biosynthesis. In terms of biological role, synthesizes alpha-1,4-glucan chains using ADP-glucose. This chain is Glycogen synthase, found in Nitratidesulfovibrio vulgaris (strain ATCC 29579 / DSM 644 / CCUG 34227 / NCIMB 8303 / VKM B-1760 / Hildenborough) (Desulfovibrio vulgaris).